A 2885-amino-acid chain; its full sequence is Chromodomain-helicase-DNA-binding protein 9 (2885 aa).

The segment at 173-195 (QCSSLHSQQSRSNLNPGQNSLGQ) is disordered. A Glycyl lysine isopeptide (Lys-Gly) (interchain with G-Cter in SUMO2) cross-link involves residue K197. Disordered stretches follow at residues 242 to 263 (CSSHQEGNYNRPSPSMTSCSVS), 283 to 347 (SLLQ…QGNY), and 479 to 677 (CLQR…QPLQ). Polar residues-rich tracts occupy residues 243–263 (SSHQEGNYNRPSPSMTSCSVS) and 283–310 (SLLQSSAGLAPGHTNQALSDFAGSNSFS). Residues 323–334 (LLNPTPSLNSNN) show a composition bias toward low complexity. 2 stretches are compositionally biased toward polar residues: residues 335–347 (FQILHSSHPQGNY) and 483–505 (QPPSSKKSDGSGTYTKLQNTQVR). At K498 the chain carries N6-acetyllysine. 2 stretches are compositionally biased toward basic and acidic residues: residues 507–526 (MSEKKPRKRVESESKQEKAN) and 534–544 (ARAKERGERNI). S549 carries the post-translational modification Phosphoserine. A compositionally biased stretch (basic and acidic residues) spans 572–592 (KPKDRDNKKPKTYSKLKEKTK). K595 is covalently cross-linked (Glycyl lysine isopeptide (Lys-Gly) (interchain with G-Cter in SUMO2)). The residue at position 610 (S610) is a Phosphoserine. Residues 617–630 (AEQRSQHTFKEQHS) are compositionally biased toward basic and acidic residues. Over residues 631-643 (QKRRSNRQIKRKK) the composition is skewed to basic residues. Positions 644 to 659 (YAEDAEGKQSEEEVKG) are enriched in basic and acidic residues. 2 consecutive Chromo domains span residues 689–760 (AIVD…HFLA) and 772–838 (VEVD…HLDR). The short motif at 867–871 (LNWLL) is the LXXLL motif 1 element. Residues 871–1045 (LFNWYNRRNC…FSLLHFLEPL (175 aa)) enclose the Helicase ATP-binding domain. 884–891 (DEMGLGKT) contacts ATP. The DEAH box signature appears at 996 to 999 (DEAH). An LXXLL motif 2 motif is present at residues 1035–1039 (LFSLL). One can recognise a Helicase C-terminal domain in the interval 1185–1336 (LIDKLLPKMK…KAVLQSMSGR (152 aa)). The disordered stretch occupies residues 1460-1484 (KDELAELSEAESEGEEKPKLRRPCD). Over residues 1464 to 1473 (AELSEAESEG) the composition is skewed to acidic residues. S1467 and S1471 each carry phosphoserine. A compositionally biased stretch (basic and acidic residues) spans 1474-1484 (EEKPKLRRPCD). Residues K1587, K1737, and K1902 each participate in a glycyl lysine isopeptide (Lys-Gly) (interchain with G-Cter in SUMO2) cross-link. S2025 is modified (phosphoserine). The LXXLL motif 3 signature appears at 2030-2034 (LPRLL). K2037 is covalently cross-linked (Glycyl lysine isopeptide (Lys-Gly) (interchain with G-Cter in SUMO2)). Residues 2046-2238 (VKSESLTEEP…TQDSFQANNG (193 aa)) form a disordered region. Phosphoserine occurs at positions 2057 and 2058. K2073 is covalently cross-linked (Glycyl lysine isopeptide (Lys-Gly) (interchain with G-Cter in SUMO2)). A phosphoserine mark is found at S2074 and S2078. Residues 2083–2092 (VLSQATGDQK) show a composition bias toward polar residues. Basic and acidic residues predominate over residues 2093 to 2103 (SGGKSETDRRM). Residues 2127 to 2193 (SQSSSDSDSD…SSSSSSSSSS (67 aa)) are compositionally biased toward low complexity. The segment covering 2201-2215 (DVQKREGTPHRKAYD) has biased composition (basic and acidic residues). Residues 2220 to 2238 (ASLSTTQDETQDSFQANNG) are compositionally biased toward polar residues. The segment at 2331–2471 (QMSKVKKHVR…LSYPQPQRIP (141 aa)) is binds A/T-rich DNA. Residues K2349, K2355, and K2360 each participate in a glycyl lysine isopeptide (Lys-Gly) (interchain with G-Cter in SUMO2) cross-link. Residues 2428–2435 (KKRRGRRR) are a.T hook-like. Positions 2473–2494 (TESPVPVINLKDGTRLAGDDAP) are disordered. The span at 2484 to 2494 (DGTRLAGDDAP) shows a compositional bias: basic and acidic residues. The short motif at 2710-2714 (LPNLL) is the LXXLL motif 4 element. A disordered region spans residues 2724 to 2770 (AESGAEEKRGNDSKELEGKKERTESQSPENGGERCVPGSPSTSSTAA). Over residues 2728–2747 (AEEKRGNDSKELEGKKERTE) the composition is skewed to basic and acidic residues. Positions 2782–2786 (LNPLL) match the LXXLL motif 5 motif. Residues 2818–2847 (KNKSDDLDSSKSVEIKEENSRVRDQEEKGG) are compositionally biased toward basic and acidic residues. A disordered region spans residues 2818-2885 (KNKSDDLDSS…SEDSDSSNED (68 aa)). K2833 is covalently cross-linked (Glycyl lysine isopeptide (Lys-Gly) (interchain with G-Cter in SUMO2)). The span at 2864–2876 (RASSGSDSSSSSS) shows a compositional bias: low complexity.

The protein belongs to the SNF2/RAD54 helicase family. As to quaternary structure, interacts with PPARA. Probably interacts with ESR1 and NR1I3. Post-translationally, phosphorylated on serine and tyrosine residues. Expressed in osteoprogenitor cells during development and in mature bone (at protein level).

The protein localises to the cytoplasm. It localises to the nucleus. It carries out the reaction ATP + H2O = ADP + phosphate + H(+). Probable ATP-dependent chromatin-remodeling factor. Acts as a transcriptional coactivator for PPARA and possibly other nuclear receptors. Has DNA-dependent ATPase activity and binds to A/T-rich DNA. Associates with A/T-rich regulatory regions in promoters of genes that participate in the differentiation of progenitors during osteogenesis. The protein is Chromodomain-helicase-DNA-binding protein 9 (Chd9) of Mus musculus (Mouse).